Reading from the N-terminus, the 197-residue chain is UPF0251 protein CT1277 (197 aa).

The tract at residues 138–197 (GGGFGGGRRGGGKCRGFRSGLDRGPGHGEGRCQGEGHGNGNGNGNGQGRMRRNQQEGGEV) is disordered. The span at 157 to 171 (GLDRGPGHGEGRCQG) shows a compositional bias: basic and acidic residues. Over residues 172–184 (EGHGNGNGNGNGQ) the composition is skewed to gly residues.

This sequence belongs to the UPF0251 family.

The chain is UPF0251 protein CT1277 from Chlorobaculum tepidum (strain ATCC 49652 / DSM 12025 / NBRC 103806 / TLS) (Chlorobium tepidum).